The primary structure comprises 123 residues: Large ribosomal subunit protein uL14c (123 aa).

The protein belongs to the universal ribosomal protein uL14 family. As to quaternary structure, part of the 50S ribosomal subunit.

It is found in the plastid. Its subcellular location is the chloroplast. Functionally, binds to 23S rRNA. The sequence is that of Large ribosomal subunit protein uL14c from Saccharum hybrid (Sugarcane).